The following is a 328-amino-acid chain: MSSVSTSGSGAPKSSFSFGRIWDQYGMLVVFAVLFIACAIFVPNFATFINMKGLGLAISMSGMVACGMLFCLASGDFDLSVASVIACAGVTTAVVINLTESLWIGVAAGLLLGVLCGLVNGFVIAKLKINALITTLATMQIVRGLAYIISDGKAVGIEDESFFALGYANWFGLPAPIWLTVACLIIFGLLLNKTTFGRNTLAIGGNEEAARLAGVPVVRTKIIIFVLSGLVSAIAGIILASRMTSGQPMTSIGYELIVISACVLGGVSLKGGIGKISYVVAGILILGTVENAMNLLNISPFAQYVVRGLILLAAVIFDRYKQKAKRTV.

Transmembrane regions (helical) follow at residues 29–49, 53–73, 79–99, 104–124, 129–149, 171–191, 220–240, 249–269, 276–296, and 297–317; these read VVFA…ATFI, GLGL…FCLA, LSVA…INLT, IGVA…GFVI, INAL…AYII, FGLP…GLLL, TKII…IILA, MTSI…GVSL, ISYV…MNLL, and NISP…AVIF.

It belongs to the binding-protein-dependent transport system permease family. AraH/RbsC subfamily.

The protein localises to the cell inner membrane. Part of the binding-protein-dependent transport system for L-arabinose. Probably responsible for the translocation of the substrate across the membrane. The protein is L-arabinose transport system permease protein AraH (araH) of Escherichia coli (strain K12).